The chain runs to 745 residues: 1,4-alpha-glucan branching enzyme GlgB (745 aa).

Catalysis depends on Asp-416, which acts as the Nucleophile. The active-site Proton donor is the Glu-469.

It belongs to the glycosyl hydrolase 13 family. GlgB subfamily. In terms of assembly, monomer.

The catalysed reaction is Transfers a segment of a (1-&gt;4)-alpha-D-glucan chain to a primary hydroxy group in a similar glucan chain.. Its pathway is glycan biosynthesis; glycogen biosynthesis. Functionally, catalyzes the formation of the alpha-1,6-glucosidic linkages in glycogen by scission of a 1,4-alpha-linked oligosaccharide from growing alpha-1,4-glucan chains and the subsequent attachment of the oligosaccharide to the alpha-1,6 position. This Shewanella sp. (strain W3-18-1) protein is 1,4-alpha-glucan branching enzyme GlgB.